A 640-amino-acid chain; its full sequence is Autophagy-related protein 20 (640 aa).

2 stretches are compositionally biased toward polar residues: residues 1-18 and 126-153; these read MSDL…SETR and AETC…PSVS. Disordered regions lie at residues 1–63 and 126–156; these read MSDL…NNKV and AETC…SNRK. S2 bears the N-acetylserine mark. In terms of domain architecture, PX spans 140–301; it reads MNGETSASEE…DFLDPNNHNW (162 aa). The a 1,2-diacyl-sn-glycero-3-phospho-(1D-myo-inositol-3-phosphate) site is built by R192, S194, K218, and R267. A phosphoserine mark is found at S361 and S363. Coiled-coil stretches lie at residues 475-512 and 562-593; these read LQNE…DNEM and TASI…KVIK.

This sequence belongs to the sorting nexin family. Forms a complex with SNX4 and ATG17.

It is found in the endosome membrane. It localises to the preautophagosomal structure membrane. Required for cytoplasm to vacuole transport (Cvt), pexophagy and mitophagy. Also involved in endoplasmic reticulum-specific autophagic process and is essential for the survival of cells subjected to severe ER stress. Functions in protein retrieval from the endocytic pathway. Required for proper sorting of the v-SNARE protein SNC1. This chain is Autophagy-related protein 20 (ATG20), found in Saccharomyces cerevisiae (strain ATCC 204508 / S288c) (Baker's yeast).